A 200-amino-acid polypeptide reads, in one-letter code: Holliday junction branch migration complex subunit RuvA (200 aa).

A domain I region spans residues 1–64; sequence MIGQLTGLVG…EDAIQLFGFA (64 aa). Residues 65–143 are domain II; it reads TTDERDWFRL…KMPGGGGTVS (79 aa). The segment at 144–148 is flexible linker; that stretch reads APGIV. The segment at 149 to 200 is domain III; that stretch reads SGPSVENDALLALAGLGFRRAEAWPVLSKVLAENENATLDLAIRLSLKDLAR.

Belongs to the RuvA family. As to quaternary structure, homotetramer. Forms an RuvA(8)-RuvB(12)-Holliday junction (HJ) complex. HJ DNA is sandwiched between 2 RuvA tetramers; dsDNA enters through RuvA and exits via RuvB. An RuvB hexamer assembles on each DNA strand where it exits the tetramer. Each RuvB hexamer is contacted by two RuvA subunits (via domain III) on 2 adjacent RuvB subunits; this complex drives branch migration. In the full resolvosome a probable DNA-RuvA(4)-RuvB(12)-RuvC(2) complex forms which resolves the HJ.

It localises to the cytoplasm. Functionally, the RuvA-RuvB-RuvC complex processes Holliday junction (HJ) DNA during genetic recombination and DNA repair, while the RuvA-RuvB complex plays an important role in the rescue of blocked DNA replication forks via replication fork reversal (RFR). RuvA specifically binds to HJ cruciform DNA, conferring on it an open structure. The RuvB hexamer acts as an ATP-dependent pump, pulling dsDNA into and through the RuvAB complex. HJ branch migration allows RuvC to scan DNA until it finds its consensus sequence, where it cleaves and resolves the cruciform DNA. This Gluconobacter oxydans (strain 621H) (Gluconobacter suboxydans) protein is Holliday junction branch migration complex subunit RuvA.